The chain runs to 379 residues: MTASAVLDLVKDLIARPSVTPDDVDCQMLLAQRLERIGFQCETIARGGVTNLWARRGAGAPLTVFAGHTDVVPPGPRDKWDSDPFVPTERDGFLYGRGAADMKSSIAAFVVAAEEFVAVHPEHPGSIALLITSDEEGPAVDGTVIVCDELRQRGEQLDYCIVGEPTSTEALGDVCKNGRRGSLSGRLLVKGVQGHVAYPHLARNPVHQLAPALTELVAIEWDQGNEYFPPTTFQVSNLHAGTGATNVVPGEAVALFNFRFSTASTPGQLKARVHEVLDRHGLEYQLDWELGGEPFLTPRGSLTDALVSAIQAETGLQAELSTTGGTSDGRFIARICPQVIEFGPCNATIHKVNERIELSSLAPLKNIYRRTLENLLLAD.

Histidine 68 is a binding site for Zn(2+). Aspartate 70 is a catalytic residue. Zn(2+) is bound at residue aspartate 101. Glutamate 135 (proton acceptor) is an active-site residue. 3 residues coordinate Zn(2+): glutamate 136, glutamate 164, and histidine 350.

This sequence belongs to the peptidase M20A family. DapE subfamily. In terms of assembly, homodimer. Zn(2+) is required as a cofactor. Co(2+) serves as cofactor.

It carries out the reaction N-succinyl-(2S,6S)-2,6-diaminopimelate + H2O = (2S,6S)-2,6-diaminopimelate + succinate. It functions in the pathway amino-acid biosynthesis; L-lysine biosynthesis via DAP pathway; LL-2,6-diaminopimelate from (S)-tetrahydrodipicolinate (succinylase route): step 3/3. Its function is as follows. Catalyzes the hydrolysis of N-succinyl-L,L-diaminopimelic acid (SDAP), forming succinate and LL-2,6-diaminopimelate (DAP), an intermediate involved in the bacterial biosynthesis of lysine and meso-diaminopimelic acid, an essential component of bacterial cell walls. This Bordetella pertussis (strain Tohama I / ATCC BAA-589 / NCTC 13251) protein is Succinyl-diaminopimelate desuccinylase.